We begin with the raw amino-acid sequence, 1574 residues long: MEVSRRKTPPRPPYPAAPLPLIAYLLALAAPARGADEPVWRSEQAIGAIAASRADGVFVASGSCLDQLDYSLKNRLSRLYRDQAGNCTEPVSLAPPARPRPGSSFSKLLLPYREGATGLEGLLLTGWTFDRGACEVRPLGNLNRSSLRNGTEVVSCHPQGSTAGVVYRASGTDLWYLAVAATYVLPEPETANRCNPAASDRDTAIALKNTEGRSLATQELGRLKLRGSAGSLHFVDAFLWNGSVYFPYYPYNYTSGAATGWPSMARIAQSTEVLFQGQAALDCDHGHPEGRRLLLSSSLVEAVDIWAGVFSAATGEGQERRSPATTALCLFRMSEIQAHARSCSWDFQATEHNCKEGDRPERVQPIASSTLIHSDLTSVYGTVVMNRTVLFLGTGDGQLLKVVLGENLTSNCPEVIYEIKEETPVFYKLVPHPMKNIYIYLTAGKEVRRIPVANCSKRKSCSECLAAADPHCGWCLPLQRCTFQGDCTHAGSFENWLDISSGPKKCPKIQILRSLRERTTVTIVGSISARHSECVVKNADTGKLLCQGRSQLNWTCACNIPSRPSYNVLVVNATFSFPSWNLSERFNFTNCASLKECPACIRSGCAWCKRDKKCIHPFTPCEPSDYERNQELCQVAVEKSPKDSGGGRVKESKRNRTDGAVQVFYIKAIEPQKISTLGKSNVIVTGANFTQASNITMILRGTSTCERDVIRVSHVLNDTHMKFSLPSSRKEMKDVCIQFDGGTCSSAGALSYIALPHCSLIVPATTWISGGQNITIMGRNFDVIDNLIISHELKGNANVNINVSEYCAATFCRFLAPNLKSSKVRTNVAVKLRVQDTYLDCGTLQYLEDPRFTGYRVESEIDTELEVKIQKENDNFNISKDDIDITLFHGENKQFNCSFENITRNQDLTTILCKIKSIKNANTIASSSKKVRVKLGNLELYVEQESVPSTWYFLIALPILLAIVIVVAVVVTRYKSKELSRKQSQQLELLESELRKEIRDGFAELQMDKLDVVDSFGTVPFLDYKHFALRTFFPESGGFTHIFTEDMHNRDANDKNESLTALDALICNKSFLVTVIHTLEKQKNFSVKDRCLFASFLTIALQTKLVYLTSILEVLTRDLMEQCSNMQPKLMLRRTESVVEKLLTNWMSVCLSGFLRETVGEPFYLLVTTLNQKINKGPVDVITCKALYTLNEDWLLWQVPEFNTVALNVVFEKIPENESADVCRNISVNVLDCDTIGQAKEKVFQAFLSKNGSPYGLQLNEIGLELQVGTRQKELLDIDSSSVILEDGITKLNTIGHYEISNGSTIKVFKKIANFTSDVEYSDDHCHLILPDSEAFQVVQGKRHRGKHKFKVKEMYLTKLLSTKVAIHSVLEKLFRSIWSLPNSRAPFAIKYFFDFLDAQAENKKITDPDVVHIWKTNSLPLRFWVNILKNPQFVFDIKKTPHIDSCLSVIAQAFMDAFSLTEQQLGKEAPTNKLLYAKDIPTYKEEVKSYYKAIRDLPPLSSLEMEEFLTQESKKHENEFNEEVALTEIYKYIVKYFDEILNKLERERGLEEAQKQLLHVKVLFDEKKKCKWM.

An N-terminal signal peptide occupies residues 1–34 (MEVSRRKTPPRPPYPAAPLPLIAYLLALAAPARG). Residues 35 to 452 (ADEPVWRSEQ…AGKEVRRIPV (418 aa)) enclose the Sema domain. Over 35 to 950 (ADEPVWRSEQ…YVEQESVPST (916 aa)) the chain is Extracellular. C64 and C87 are joined by a disulfide. N-linked (GlcNAc...) asparagine glycosylation is found at N86, N143, and N149. C156 and C194 are joined by a disulfide. N-linked (GlcNAc...) asparagine glycosylation occurs at N252. A disulfide bond links C283 and C329. N-linked (GlcNAc...) asparagine glycosylation is found at N386 and N407. Cystine bridges form between C455-C472, C461-C506, C464-C481, and C475-C487. Residues N694, N773, and N802 are each glycosylated (N-linked (GlcNAc...) asparagine). The chain crosses the membrane as a helical span at residues 951–971 (WYFLIALPILLAIVIVVAVVV). Topologically, residues 972–1574 (TRYKSKELSR…FDEKKKCKWM (603 aa)) are cytoplasmic. The residue at position 984 (S984) is a Phosphoserine.

This sequence belongs to the plexin family. Monomer. Homodimer. Interacts with SEMA7A. In terms of tissue distribution, detected on dendritic cells, skin Langerhans cells and neutrophils (at protein level).

The protein localises to the membrane. Its function is as follows. Receptor for SEMA7A, for vaccinia virus semaphorin A39R and for herpesvirus Sema protein. Binding of semaphorins triggers cellular responses leading to the rearrangement of the cytoskeleton and to secretion of IL6 and IL8. The chain is Plexin-C1 (Plxnc1) from Mus musculus (Mouse).